Reading from the N-terminus, the 213-residue chain is Kynurenine formamidase (213 aa).

Tryptophan 18 contributes to the substrate binding site. Histidine 48, histidine 52, and aspartate 54 together coordinate Zn(2+). The active-site Proton donor/acceptor is histidine 58. Residues histidine 160 and glutamate 172 each coordinate Zn(2+).

The protein belongs to the Cyclase 1 superfamily. KynB family. Homodimer. Requires Zn(2+) as cofactor.

The catalysed reaction is N-formyl-L-kynurenine + H2O = L-kynurenine + formate + H(+). Its pathway is amino-acid degradation; L-tryptophan degradation via kynurenine pathway; L-kynurenine from L-tryptophan: step 2/2. Functionally, catalyzes the hydrolysis of N-formyl-L-kynurenine to L-kynurenine, the second step in the kynurenine pathway of tryptophan degradation. This Burkholderia cenocepacia (strain ATCC BAA-245 / DSM 16553 / LMG 16656 / NCTC 13227 / J2315 / CF5610) (Burkholderia cepacia (strain J2315)) protein is Kynurenine formamidase.